The primary structure comprises 241 residues: Translation initiation factor IF-3 (241 aa).

Positions 178 to 241 are disordered; that stretch reads KKTEAMAEAR…EAPAEASTEA (64 aa). Positions 180–197 are enriched in basic and acidic residues; it reads TEAMAEAREAQAARKAEA. The segment covering 208-229 has biased composition (acidic residues); it reads ADEDIPEGELPEGEVPEAETTE. Positions 230–241 are enriched in low complexity; the sequence is AAEAPAEASTEA.

This sequence belongs to the IF-3 family. Monomer.

The protein resides in the cytoplasm. IF-3 binds to the 30S ribosomal subunit and shifts the equilibrium between 70S ribosomes and their 50S and 30S subunits in favor of the free subunits, thus enhancing the availability of 30S subunits on which protein synthesis initiation begins. This Streptomyces avermitilis (strain ATCC 31267 / DSM 46492 / JCM 5070 / NBRC 14893 / NCIMB 12804 / NRRL 8165 / MA-4680) protein is Translation initiation factor IF-3.